Here is a 300-residue protein sequence, read N- to C-terminus: Ribonuclease Z (300 aa).

Zn(2+) is bound by residues histidine 63, histidine 65, aspartate 67, histidine 68, histidine 140, aspartate 207, and histidine 265. Aspartate 67 serves as the catalytic Proton acceptor.

The protein belongs to the RNase Z family. As to quaternary structure, homodimer. It depends on Zn(2+) as a cofactor.

It catalyses the reaction Endonucleolytic cleavage of RNA, removing extra 3' nucleotides from tRNA precursor, generating 3' termini of tRNAs. A 3'-hydroxy group is left at the tRNA terminus and a 5'-phosphoryl group is left at the trailer molecule.. Zinc phosphodiesterase, which displays some tRNA 3'-processing endonuclease activity. Probably involved in tRNA maturation, by removing a 3'-trailer from precursor tRNA. The protein is Ribonuclease Z of Ignicoccus hospitalis (strain KIN4/I / DSM 18386 / JCM 14125).